A 371-amino-acid chain; its full sequence is Glutamate 5-kinase (371 aa).

Residue K11 coordinates ATP. Residues S52, D139, and N151 each coordinate substrate. ATP-binding positions include 171-172 (TD) and 213-219 (TGGMATK). The PUA domain occupies 278–356 (EGSLTLDEGA…AEIPRILGYE (79 aa)).

It belongs to the glutamate 5-kinase family.

It localises to the cytoplasm. It catalyses the reaction L-glutamate + ATP = L-glutamyl 5-phosphate + ADP. It participates in amino-acid biosynthesis; L-proline biosynthesis; L-glutamate 5-semialdehyde from L-glutamate: step 1/2. In terms of biological role, catalyzes the transfer of a phosphate group to glutamate to form L-glutamate 5-phosphate. This Synechococcus sp. (strain JA-2-3B'a(2-13)) (Cyanobacteria bacterium Yellowstone B-Prime) protein is Glutamate 5-kinase.